We begin with the raw amino-acid sequence, 659 residues long: Cyclic-di-AMP phosphodiesterase GdpP (659 aa).

Residues 1 to 8 (MPSFYEKP) lie on the Cytoplasmic side of the membrane. Transmembrane regions (helical) follow at residues 9-29 (LFRY…LISF) and 30-50 (YFNW…LFFI). Residues 51 to 659 (KRADSLIRQE…DEYFEGGVQR (609 aa)) lie on the Cytoplasmic side of the membrane. A PAS-like domain, required for heme-binding region spans residues 84–149 (PIGIMLFNDQ…NDRKFRVVIK (66 aa)). The GGDEF domain maps to 173–301 (ERTVLAYIFL…GGDQVAIKLP (129 aa)). The interval 339-496 (NVIIMGHKFP…IEATALLAGI (158 aa)) is DHH domain. 6 residues coordinate Mn(2+): His-345, Asp-349, Asp-351, Asp-420, His-444, and Asp-499. The interval 591 to 646 (FAVARRDEQTVCISARSLGEVNVQIIMEALEGGGHLTNAATQLSGISVSEALERLK) is DHHA1 domain.

The protein belongs to the GdpP/PdeA phosphodiesterase family. Requires heme b as cofactor. Mg(2+) serves as cofactor. Mn(2+) is required as a cofactor.

The protein resides in the cell membrane. It carries out the reaction 3',3'-c-di-AMP + H2O = 5'-O-phosphonoadenylyl-(3'-&gt;5')-adenosine + H(+). With respect to regulation, phosphodiesterase (PDE) inhibited by Zn(2+), Ca(2+) inhibits in the presence of Mg(2+) but not Mn(2+); c-di-AMP PDE activity is competitively inhibited by ppGpp. Heme binding (by Fe(2+) or Fe(3+) heme) inhibits PDE, activity is partially restored by KCN or NO only for Fe(2+) heme. Binding of NO to Fe(2+) heme switches from hexa- to pentacoordination. Heme binding inhibits the ATPase activity. Has phosphodiesterase (PDE) activity against cyclic-di-AMP (c-di-AMP) and to a much lesser extent against cyclic-di-GMP (c-di-GMP) in the DHH/DHHA1 domains. Also has ATPase activity, probably via the GGDEF domain. Overexpression leads to increased sensitivity to methyl methanesulfonate (MMS) and H(2)O(2). Overexpression leads to extreme sensitivity to the beta-lactam antibiotic cefuroxime (CEF), probably dependent on PDE activity. May monitor cellular heme or NO levels. In B.subtilis c-di-AMP is a second messenger that mediates growth, DNA repair and cell wall homeostasis; it is toxic when present in excess. This Bacillus subtilis (strain 168) protein is Cyclic-di-AMP phosphodiesterase GdpP.